The chain runs to 839 residues: Mitochondrial 15S rRNA processing factor CCM1 (839 aa).

The transit peptide at 1–59 directs the protein to the mitochondrion; that stretch reads MLSLKSRGSWNVLRWIQVPRRTAVIPAKPSPMRRKRRRIKNVSSKDLDLRGIDPQDSRA. PPR repeat units follow at residues 313–347 and 350–384; these read NREN…SSSH and DVTT…QLQP.

The protein belongs to the CCM1 family. Binds to mitochondrial small subunit 15S rRNA.

Its subcellular location is the mitochondrion. Regulates mitochondrial small subunit maturation by controlling 15S rRNA 5'-end processing. Localizes to the 5' precursor of the 15S rRNA in a position that is subsequently occupied by mS47 in the mature yeast mtSSU. Uses structure and sequence-specific RNA recognition, binding to a single-stranded region of the precursor and specifically recognizing bases -6 to -1. The exchange of Ccm1 for mS47 is coupled to the irreversible removal of precursor rRNA that is accompanied by conformational changes of the mitoribosomal proteins uS5m and mS26. These conformational changes signal completion of 5'-end rRNA processing through protection of the mature 5'-end of the 15S rRNA and stabilization of mS47. The removal of the 5' precursor together with the dissociation of Ccm1 may be catalyzed by the 5'-3' exoribonuclease Pet127. Involved in the specific removal of group I introns in mitochondrial encoded transcripts. In Zygosaccharomyces rouxii (strain ATCC 2623 / CBS 732 / NBRC 1130 / NCYC 568 / NRRL Y-229), this protein is Mitochondrial 15S rRNA processing factor CCM1 (CCM1).